The following is a 35-amino-acid chain: Basic endochitinase CH1 (35 aa).

It belongs to the glycosyl hydrolase 19 family. Chitinase class I subfamily.

The catalysed reaction is Random endo-hydrolysis of N-acetyl-beta-D-glucosaminide (1-&gt;4)-beta-linkages in chitin and chitodextrins.. Functionally, defense against chitin-containing fungal pathogens. The polypeptide is Basic endochitinase CH1 (Castanea sativa (Sweet chestnut)).